Reading from the N-terminus, the 475-residue chain is tRNA-2-methylthio-N(6)-dimethylallyladenosine synthase (475 aa).

The tract at residues 1–21 (MTTAPTSPALPASSDTAPTGP) is disordered. The 122-residue stretch at 24 to 145 (RGLHVITWGC…LPEMVARAAR (122 aa)) folds into the MTTase N-terminal domain. 6 residues coordinate [4Fe-4S] cluster: C33, C69, C108, C186, C190, and C193. Residues 172 to 404 (TQGNLTAFLT…QALLREQQDA (233 aa)) form the Radical SAM core domain. The TRAM domain occupies 407-469 (ADMVGTVQEI…TNSLGGTLIR (63 aa)).

The protein belongs to the methylthiotransferase family. MiaB subfamily. Monomer. The cofactor is [4Fe-4S] cluster.

The protein localises to the cytoplasm. The catalysed reaction is N(6)-dimethylallyladenosine(37) in tRNA + (sulfur carrier)-SH + AH2 + 2 S-adenosyl-L-methionine = 2-methylsulfanyl-N(6)-dimethylallyladenosine(37) in tRNA + (sulfur carrier)-H + 5'-deoxyadenosine + L-methionine + A + S-adenosyl-L-homocysteine + 2 H(+). In terms of biological role, catalyzes the methylthiolation of N6-(dimethylallyl)adenosine (i(6)A), leading to the formation of 2-methylthio-N6-(dimethylallyl)adenosine (ms(2)i(6)A) at position 37 in tRNAs that read codons beginning with uridine. The polypeptide is tRNA-2-methylthio-N(6)-dimethylallyladenosine synthase (Gluconobacter oxydans (strain 621H) (Gluconobacter suboxydans)).